A 93-amino-acid polypeptide reads, in one-letter code: Late embryogenesis abundant protein B19.1A (93 aa).

The tract at residues 1–93 is disordered; it reads MASGQQERSQ…IDESKFKTKS (93 aa). Composition is skewed to basic and acidic residues over residues 9-19 and 73-93; these read SQLDRKAREGE and GGER…KTKS.

This sequence belongs to the small hydrophilic plant seed protein family. Embryos and young seedlings.

Lea proteins are late embryonic proteins abundant in higher plant seed embryos. It may have a role in desiccation tolerance by acting as an osmoprotective protein or as a desiccation-damage repair protein. The chain is Late embryogenesis abundant protein B19.1A (B19.1A) from Hordeum vulgare (Barley).